Reading from the N-terminus, the 338-residue chain is 1-aminocyclopropane-1-carboxylate deaminase (338 aa).

The residue at position 51 (K51) is an N6-(pyridoxal phosphate)lysine. S78 acts as the Nucleophile in catalysis.

The protein belongs to the ACC deaminase/D-cysteine desulfhydrase family. In terms of assembly, homotrimer. Pyridoxal 5'-phosphate is required as a cofactor.

It catalyses the reaction 1-aminocyclopropane-1-carboxylate + H2O = 2-oxobutanoate + NH4(+). Its function is as follows. Catalyzes a cyclopropane ring-opening reaction, the irreversible conversion of 1-aminocyclopropane-1-carboxylate (ACC) to ammonia and alpha-ketobutyrate. Allows growth on ACC as a nitrogen source. The chain is 1-aminocyclopropane-1-carboxylate deaminase from Burkholderia multivorans (strain ATCC 17616 / 249).